A 121-amino-acid polypeptide reads, in one-letter code: Small ribosomal subunit protein bS6 (121 aa).

The disordered stretch occupies residues 99-121; sequence PSLMMRNVEREEARKTQQQEFAA. Residues 105–115 show a composition bias toward basic and acidic residues; sequence NVEREEARKTQ.

This sequence belongs to the bacterial ribosomal protein bS6 family.

Its function is as follows. Binds together with bS18 to 16S ribosomal RNA. This Polaromonas naphthalenivorans (strain CJ2) protein is Small ribosomal subunit protein bS6.